The sequence spans 456 residues: MERTCLAIILAAGESTRMKSAMSKVLHPVAGRPMIAHVVDALASASITDVALVVGRDAEAVSTAASTGSVTVSSFLQKERLGTAHAVLAARAAIEKGYDDVLVVFGDTPLITAAPLTAARERLAEGNDVVVIGFETADPTGYGRLIVKDGELLAIREHKDASEEERRITYCNGGLMAISGSKALDLLGRIGNANVKGEYYLTDLVEIVRSLGGRAIAVEAPEEELTGCNTRAELAYIERLWQQRRRQELMLAGVSMVAPETVFLAWDTELAEDVLVEPNVVFGPGVRVESGAVIHAFSHVEGAHVRAGATVGPFARLRPGADLGPKSKVGNFCEVKKAEIGAGAKVNHLTYIGDAFVGAGSNIGAGTITCNYDGVNKHVTRIGENTFIGSNASLVAPVSIGSGALVASGSVITEDVPADAVAFGRARQEIKPGRAPILRQRYEAEKAARKKVKAAE.

A pyrophosphorylase region spans residues methionine 1–arginine 231. Residues leucine 10–glycine 13, lysine 24, glutamine 77, and glycine 82–threonine 83 each bind UDP-N-acetyl-alpha-D-glucosamine. Aspartate 107 is a binding site for Mg(2+). Positions 143, 157, 172, and 229 each coordinate UDP-N-acetyl-alpha-D-glucosamine. Mg(2+) is bound at residue asparagine 229. The interval alanine 232–alanine 252 is linker. The N-acetyltransferase stretch occupies residues glycine 253–glutamate 456. UDP-N-acetyl-alpha-D-glucosamine is bound by residues arginine 318 and lysine 336. The Proton acceptor role is filled by histidine 348. UDP-N-acetyl-alpha-D-glucosamine contacts are provided by tyrosine 351 and asparagine 362. Residues alanine 365, asparagine 371–tyrosine 372, serine 390, serine 408, and arginine 425 each bind acetyl-CoA.

This sequence in the N-terminal section; belongs to the N-acetylglucosamine-1-phosphate uridyltransferase family. It in the C-terminal section; belongs to the transferase hexapeptide repeat family. As to quaternary structure, homotrimer. It depends on Mg(2+) as a cofactor.

Its subcellular location is the cytoplasm. The catalysed reaction is alpha-D-glucosamine 1-phosphate + acetyl-CoA = N-acetyl-alpha-D-glucosamine 1-phosphate + CoA + H(+). It carries out the reaction N-acetyl-alpha-D-glucosamine 1-phosphate + UTP + H(+) = UDP-N-acetyl-alpha-D-glucosamine + diphosphate. It functions in the pathway nucleotide-sugar biosynthesis; UDP-N-acetyl-alpha-D-glucosamine biosynthesis; N-acetyl-alpha-D-glucosamine 1-phosphate from alpha-D-glucosamine 6-phosphate (route II): step 2/2. The protein operates within nucleotide-sugar biosynthesis; UDP-N-acetyl-alpha-D-glucosamine biosynthesis; UDP-N-acetyl-alpha-D-glucosamine from N-acetyl-alpha-D-glucosamine 1-phosphate: step 1/1. It participates in bacterial outer membrane biogenesis; LPS lipid A biosynthesis. Its function is as follows. Catalyzes the last two sequential reactions in the de novo biosynthetic pathway for UDP-N-acetylglucosamine (UDP-GlcNAc). The C-terminal domain catalyzes the transfer of acetyl group from acetyl coenzyme A to glucosamine-1-phosphate (GlcN-1-P) to produce N-acetylglucosamine-1-phosphate (GlcNAc-1-P), which is converted into UDP-GlcNAc by the transfer of uridine 5-monophosphate (from uridine 5-triphosphate), a reaction catalyzed by the N-terminal domain. The protein is Bifunctional protein GlmU of Sinorhizobium fredii (strain NBRC 101917 / NGR234).